Consider the following 110-residue polypeptide: Protein RnfH (110 aa).

Residues 86 to 110 are disordered; that stretch reads RQRRVEKSRQEGSVEGRKWLPKDSR. The span at 88–110 shows a compositional bias: basic and acidic residues; that stretch reads RRVEKSRQEGSVEGRKWLPKDSR.

The protein belongs to the UPF0125 (RnfH) family.

The sequence is that of Protein RnfH from Paraburkholderia phymatum (strain DSM 17167 / CIP 108236 / LMG 21445 / STM815) (Burkholderia phymatum).